Reading from the N-terminus, the 189-residue chain is Peptidyl-tRNA hydrolase (189 aa).

Residue tyrosine 15 coordinates tRNA. The Proton acceptor role is filled by histidine 20. TRNA-binding residues include phenylalanine 66, asparagine 68, and asparagine 114.

Belongs to the PTH family. As to quaternary structure, monomer.

It is found in the cytoplasm. The enzyme catalyses an N-acyl-L-alpha-aminoacyl-tRNA + H2O = an N-acyl-L-amino acid + a tRNA + H(+). Functionally, hydrolyzes ribosome-free peptidyl-tRNAs (with 1 or more amino acids incorporated), which drop off the ribosome during protein synthesis, or as a result of ribosome stalling. Catalyzes the release of premature peptidyl moieties from peptidyl-tRNA molecules trapped in stalled 50S ribosomal subunits, and thus maintains levels of free tRNAs and 50S ribosomes. This chain is Peptidyl-tRNA hydrolase, found in Streptococcus pyogenes serotype M3 (strain ATCC BAA-595 / MGAS315).